The sequence spans 487 residues: Vacuolar protein sorting-associated protein 30 (487 aa).

Positions 33–129 (PQTLKKSSVP…DNPDAPMGSE (97 aa)) are disordered. The span at 52-62 (QSRKSIYDRVS) shows a compositional bias: basic and acidic residues. Over residues 81–94 (SSMSFVLLSESQMA) the composition is skewed to polar residues. Residues 152–282 (VECTEMLVEG…DSQLLEKLQR (131 aa)) are a coiled coil. Residues 283 to 480 (SNVYNDTFCI…LAHASNVTSN (198 aa)) are BARA. The interval 456–481 (WTKACKLTLTCCKFLLAHASNVTSNA) is required for membrane-association, autophagic function during starvation and normal autophagosome morphology.

This sequence belongs to the beclin family. As to quaternary structure, component of the autophagy-specific VPS34 PI3-kinase complex I; and of the VPS34 PI3-kinase complex II.

The protein localises to the endosome membrane. Its subcellular location is the vacuole membrane. It localises to the preautophagosomal structure membrane. Required for cytoplasm to vacuole transport (Cvt), autophagy, nucleophagy, and mitophagy, as a part of the autophagy-specific VPS34 PI3-kinase complex I. This complex is essential to recruit the ATG8-phosphatidylinositol conjugate and the ATG12-ATG5 conjugate to the pre-autophagosomal structure. Also involved in endosome-to-Golgi retrograde transport as part of the VPS34 PI3-kinase complex II. Autophagy is required for proper vegetative growth, asexual/sexual reproduction, and full virulence. Autophagy is particularly involved in the biosynthesis of deoxynivalenol (DON), an important virulence determinant. The sequence is that of Vacuolar protein sorting-associated protein 30 from Gibberella zeae (strain ATCC MYA-4620 / CBS 123657 / FGSC 9075 / NRRL 31084 / PH-1) (Wheat head blight fungus).